Consider the following 391-residue polypeptide: Ferrochelatase (391 aa).

Fe cation contacts are provided by His-196 and Glu-281.

The protein belongs to the ferrochelatase family.

The protein localises to the cytoplasm. The enzyme catalyses heme b + 2 H(+) = protoporphyrin IX + Fe(2+). The protein operates within porphyrin-containing compound metabolism; protoheme biosynthesis; protoheme from protoporphyrin-IX: step 1/1. Catalyzes the ferrous insertion into protoporphyrin IX. This Prochlorococcus marinus (strain NATL2A) protein is Ferrochelatase.